The following is a 251-amino-acid chain: ATP synthase subunit a (251 aa).

5 consecutive transmembrane segments (helical) span residues 34 to 54, 93 to 113, 130 to 150, 195 to 215, and 216 to 236; these read VFLTSWFVIGVLVLASVAASS, FVGTLFLFIFVSNWSGALVPF, INTTVALALLTSLAYFYAGFS, LVVGVLVLLVPLFVPLPVMAL, and GLFTSAIQALIFATLAAAYIG.

The protein belongs to the ATPase A chain family. F-type ATPases have 2 components, CF(1) - the catalytic core - and CF(0) - the membrane proton channel. CF(1) has five subunits: alpha(3), beta(3), gamma(1), delta(1), epsilon(1). CF(0) has four main subunits: a, b, b' and c.

Its subcellular location is the cellular thylakoid membrane. In terms of biological role, key component of the proton channel; it plays a direct role in the translocation of protons across the membrane. The polypeptide is ATP synthase subunit a (Trichormus variabilis (strain ATCC 29413 / PCC 7937) (Anabaena variabilis)).